Here is a 373-residue protein sequence, read N- to C-terminus: NADH-quinone oxidoreductase subunit D (373 aa).

It belongs to the complex I 49 kDa subunit family. NDH-1 is composed of 14 different subunits. Subunits NuoB, C, D, E, F, and G constitute the peripheral sector of the complex.

The protein localises to the cell inner membrane. It carries out the reaction a quinone + NADH + 5 H(+)(in) = a quinol + NAD(+) + 4 H(+)(out). Functionally, NDH-1 shuttles electrons from NADH, via FMN and iron-sulfur (Fe-S) centers, to quinones in the respiratory chain. The immediate electron acceptor for the enzyme in this species is believed to be ubiquinone. Couples the redox reaction to proton translocation (for every two electrons transferred, four hydrogen ions are translocated across the cytoplasmic membrane), and thus conserves the redox energy in a proton gradient. This Syntrophobacter fumaroxidans (strain DSM 10017 / MPOB) protein is NADH-quinone oxidoreductase subunit D.